A 303-amino-acid chain; its full sequence is Pyridoxal 5'-phosphate synthase subunit PdxS (303 aa).

Position 33 (Asp33) interacts with D-ribose 5-phosphate. Lys90 serves as the catalytic Schiff-base intermediate with D-ribose 5-phosphate. Gly162 lines the D-ribose 5-phosphate pocket. Position 174 (Arg174) interacts with D-glyceraldehyde 3-phosphate. D-ribose 5-phosphate is bound by residues Gly223 and 244–245 (GS).

It belongs to the PdxS/SNZ family. In terms of assembly, in the presence of PdxT, forms a dodecamer of heterodimers.

It catalyses the reaction aldehydo-D-ribose 5-phosphate + D-glyceraldehyde 3-phosphate + L-glutamine = pyridoxal 5'-phosphate + L-glutamate + phosphate + 3 H2O + H(+). It functions in the pathway cofactor biosynthesis; pyridoxal 5'-phosphate biosynthesis. Its function is as follows. Catalyzes the formation of pyridoxal 5'-phosphate from ribose 5-phosphate (RBP), glyceraldehyde 3-phosphate (G3P) and ammonia. The ammonia is provided by the PdxT subunit. Can also use ribulose 5-phosphate and dihydroxyacetone phosphate as substrates, resulting from enzyme-catalyzed isomerization of RBP and G3P, respectively. This is Pyridoxal 5'-phosphate synthase subunit PdxS from Mycolicibacterium smegmatis (strain ATCC 700084 / mc(2)155) (Mycobacterium smegmatis).